The chain runs to 426 residues: UDP-N-acetylglucosamine 1-carboxyvinyltransferase 2 (426 aa).

22–23 (KN) contacts phosphoenolpyruvate. Arg92 is a binding site for UDP-N-acetyl-alpha-D-glucosamine. The active-site Proton donor is the Asp116. UDP-N-acetyl-alpha-D-glucosamine is bound by residues 121–125 (RPIDQ), Asp307, and Ile329.

The protein belongs to the EPSP synthase family. MurA subfamily.

The protein localises to the cytoplasm. It catalyses the reaction phosphoenolpyruvate + UDP-N-acetyl-alpha-D-glucosamine = UDP-N-acetyl-3-O-(1-carboxyvinyl)-alpha-D-glucosamine + phosphate. The protein operates within cell wall biogenesis; peptidoglycan biosynthesis. In terms of biological role, cell wall formation. Adds enolpyruvyl to UDP-N-acetylglucosamine. This chain is UDP-N-acetylglucosamine 1-carboxyvinyltransferase 2, found in Lactiplantibacillus plantarum (strain ATCC BAA-793 / NCIMB 8826 / WCFS1) (Lactobacillus plantarum).